The primary structure comprises 231 residues: ATP-dependent dethiobiotin synthetase BioD (231 aa).

12–17 contacts ATP; the sequence is EVGKTV. Threonine 16 provides a ligand contact to Mg(2+). Lysine 37 is an active-site residue. Serine 41 lines the substrate pocket. Residues aspartate 51, 112 to 115, and 202 to 204 each bind ATP; these read EGAG and PKL. Aspartate 51 and glutamate 112 together coordinate Mg(2+).

The protein belongs to the dethiobiotin synthetase family. In terms of assembly, homodimer. Mg(2+) is required as a cofactor.

The protein localises to the cytoplasm. The enzyme catalyses (7R,8S)-7,8-diammoniononanoate + CO2 + ATP = (4R,5S)-dethiobiotin + ADP + phosphate + 3 H(+). Its pathway is cofactor biosynthesis; biotin biosynthesis; biotin from 7,8-diaminononanoate: step 1/2. Its function is as follows. Catalyzes a mechanistically unusual reaction, the ATP-dependent insertion of CO2 between the N7 and N8 nitrogen atoms of 7,8-diaminopelargonic acid (DAPA, also called 7,8-diammoniononanoate) to form a ureido ring. This Bacillus subtilis subsp. natto protein is ATP-dependent dethiobiotin synthetase BioD.